The sequence spans 189 residues: Glycerol-3-phosphate acyltransferase (189 aa).

Transmembrane regions (helical) follow at residues 1–21 (MVWLLAILAYLLGSLSFAVLL), 50–70 (KLAILTLLGDVGKGLLPVLVA), 72–92 (WLGLGVMEEAWVGIAAVIGHL), 111–131 (MLLGLYPPAVLLAAAAWLLTF), and 151–171 (LLAWQQPGALLPMTVLTGLIV).

The protein belongs to the PlsY family. Probably interacts with PlsX.

It localises to the cell inner membrane. The catalysed reaction is an acyl phosphate + sn-glycerol 3-phosphate = a 1-acyl-sn-glycero-3-phosphate + phosphate. It participates in lipid metabolism; phospholipid metabolism. In terms of biological role, catalyzes the transfer of an acyl group from acyl-phosphate (acyl-PO(4)) to glycerol-3-phosphate (G3P) to form lysophosphatidic acid (LPA). This enzyme utilizes acyl-phosphate as fatty acyl donor, but not acyl-CoA or acyl-ACP. In Pseudomonas aeruginosa (strain LESB58), this protein is Glycerol-3-phosphate acyltransferase.